The sequence spans 274 residues: Probable S-adenosylmethionine-dependent methyltransferase MT3114 (274 aa).

A disordered region spans residues 1 to 24 (MCAFVPHVPRHSRGDNPPSASTAS).

It belongs to the methyltransferase superfamily.

Probable S-adenosylmethionine-dependent methyltransferase required for the 6-O-methylation of the polysaccharide backbone of 6-O-methylglucosyl lipopolysaccharides (MGLP). This chain is Probable S-adenosylmethionine-dependent methyltransferase MT3114, found in Mycobacterium tuberculosis (strain CDC 1551 / Oshkosh).